The primary structure comprises 147 residues: Endoribonuclease YbeY (147 aa).

3 residues coordinate Zn(2+): H107, H111, and H117.

The protein belongs to the endoribonuclease YbeY family. The cofactor is Zn(2+).

The protein resides in the cytoplasm. Its function is as follows. Single strand-specific metallo-endoribonuclease involved in late-stage 70S ribosome quality control and in maturation of the 3' terminus of the 16S rRNA. The sequence is that of Endoribonuclease YbeY from Solibacter usitatus (strain Ellin6076).